The primary structure comprises 73 residues: uncharacterized protein (73 aa).

2 consecutive transmembrane segments (helical) span residues 7 to 27 (LFSSLTFSLTVLFLLLLIPNL) and 47 to 67 (YFGYPSLGILFAGILSPIIIL).

Its subcellular location is the cell membrane. This is an uncharacterized protein from Methanocaldococcus jannaschii (strain ATCC 43067 / DSM 2661 / JAL-1 / JCM 10045 / NBRC 100440) (Methanococcus jannaschii).